The sequence spans 72 residues: Gas vesicle protein A (72 aa).

Belongs to the gas vesicle GvpA family. The gas vesicle shell is 2 nm thick and consists of a single layer of this protein. It forms helical ribs nearly perpendicular to the long axis of the vesicle.

Its subcellular location is the gas vesicle shell. Functionally, gas vesicles are hollow, gas filled proteinaceous nanostructures found in some microorganisms. During planktonic growth they allow positioning of the organism at a favorable depth for light or nutrient acquisition. GvpA forms the protein shell. This Planktothrix agardhii (Oscillatoria agardhii) protein is Gas vesicle protein A.